A 102-amino-acid polypeptide reads, in one-letter code: Large ribosomal subunit protein bL21 (102 aa).

Belongs to the bacterial ribosomal protein bL21 family. As to quaternary structure, part of the 50S ribosomal subunit. Contacts protein L20.

This protein binds to 23S rRNA in the presence of protein L20. The sequence is that of Large ribosomal subunit protein bL21 from Leifsonia xyli subsp. xyli (strain CTCB07).